Consider the following 481-residue polypeptide: Glutamate--tRNA ligase (481 aa).

A 'HIGH' region motif is present at residues 9–19; sequence PSPTGNLHIGT. Residues 247–251 carry the 'KMSKS' region motif; the sequence is KLSKR. Position 250 (Lys250) interacts with ATP.

This sequence belongs to the class-I aminoacyl-tRNA synthetase family. Glutamate--tRNA ligase type 1 subfamily. In terms of assembly, monomer.

The protein localises to the cytoplasm. The catalysed reaction is tRNA(Glu) + L-glutamate + ATP = L-glutamyl-tRNA(Glu) + AMP + diphosphate. Functionally, catalyzes the attachment of glutamate to tRNA(Glu) in a two-step reaction: glutamate is first activated by ATP to form Glu-AMP and then transferred to the acceptor end of tRNA(Glu). The sequence is that of Glutamate--tRNA ligase from Nostoc punctiforme (strain ATCC 29133 / PCC 73102).